The following is a 498-amino-acid chain: Lysine--tRNA ligase (498 aa).

Mg(2+) is bound by residues E409 and E416.

Belongs to the class-II aminoacyl-tRNA synthetase family. In terms of assembly, homodimer. Requires Mg(2+) as cofactor.

It is found in the cytoplasm. The catalysed reaction is tRNA(Lys) + L-lysine + ATP = L-lysyl-tRNA(Lys) + AMP + diphosphate. The sequence is that of Lysine--tRNA ligase from Coxiella burnetii (strain CbuK_Q154) (Coxiella burnetii (strain Q154)).